Consider the following 511-residue polypeptide: Bifunctional purine biosynthesis protein PurH (511 aa).

Positions 1 to 145 (MKKRALVSVS…KNHKFVSVIV (145 aa)) constitute an MGS-like domain.

It belongs to the PurH family.

It carries out the reaction (6R)-10-formyltetrahydrofolate + 5-amino-1-(5-phospho-beta-D-ribosyl)imidazole-4-carboxamide = 5-formamido-1-(5-phospho-D-ribosyl)imidazole-4-carboxamide + (6S)-5,6,7,8-tetrahydrofolate. The enzyme catalyses IMP + H2O = 5-formamido-1-(5-phospho-D-ribosyl)imidazole-4-carboxamide. It participates in purine metabolism; IMP biosynthesis via de novo pathway; 5-formamido-1-(5-phospho-D-ribosyl)imidazole-4-carboxamide from 5-amino-1-(5-phospho-D-ribosyl)imidazole-4-carboxamide (10-formyl THF route): step 1/1. Its pathway is purine metabolism; IMP biosynthesis via de novo pathway; IMP from 5-formamido-1-(5-phospho-D-ribosyl)imidazole-4-carboxamide: step 1/1. The chain is Bifunctional purine biosynthesis protein PurH from Bacillus cereus (strain B4264).